The sequence spans 197 residues: MSKYTVKRASVLCIFGIGLFVPATGTFACGLLLVLGFWVLFFSSLLARFLSQFFMRTRSAPLFEVCLTLSATIMYDNLIQGFFPLVRMMLCPYLFITALSRTLDLCLTAYDADAESLECVGVFGIMIAGISLVRELVAFGCVSLPAPSGFLRIISFPPSNVIRFAATGAGTLISCGIVLWIFRSAGNDHTPSLRSEW.

The next 4 helical transmembrane spans lie at 12–41 (LCIF…WVLF), 78–100 (LIQG…TALS), 120–142 (VGVF…FGCV), and 162–184 (IRFA…IFRS).

It is found in the cell membrane. This is an uncharacterized protein from Treponema pallidum (strain Nichols).